The sequence spans 87 residues: Neutrophil antibiotic peptide NP-3A (87 aa).

Residues 1-19 (MRTLTLLTTLLLLALHTQA) form the signal peptide. The propeptide occupies 20–58 (ESPQGSTKEAPDEEQDISVFFGGDKGTALQDAAVKAGVT). Intrachain disulfides connect cysteine 59-cysteine 87, cysteine 61-cysteine 76, and cysteine 66-cysteine 86.

Belongs to the alpha-defensin family. As to expression, highest expression in bone marrow and to a much lesser extent in small intestine.

The protein resides in the secreted. Its function is as follows. Active in vitro against S.aureus, fungi, Gram-positive and Gram-negative bacteria and to a lesser extent against an enveloped virus. In Rattus norvegicus (Rat), this protein is Neutrophil antibiotic peptide NP-3A.